Here is a 763-residue protein sequence, read N- to C-terminus: Phosphoglycerol transferase I (763 aa).

4 helical membrane passes run 1 to 21, 26 to 46, 77 to 97, and 108 to 128; these read MSEL…AWKA, WWFA…ITLF, ILPG…LGWI, and FGYS…SPAF.

It belongs to the OpgB family.

Its subcellular location is the cell inner membrane. The enzyme catalyses a phosphatidylglycerol + a membrane-derived-oligosaccharide D-glucose = a 1,2-diacyl-sn-glycerol + a membrane-derived-oligosaccharide 6-(glycerophospho)-D-glucose.. The protein operates within glycan metabolism; osmoregulated periplasmic glucan (OPG) biosynthesis. Transfers a phosphoglycerol residue from phosphatidylglycerol to the membrane-bound nascent glucan backbones. The polypeptide is Phosphoglycerol transferase I (Escherichia coli O139:H28 (strain E24377A / ETEC)).